A 659-amino-acid chain; its full sequence is ATP-binding cassette sub-family D member 3 (659 aa).

Residues 2–61 form an interaction with PEX19 region; sequence AAFSKYLTARNSSLAGAAFLLFCLLHKRRRALGLHGKKSGKPPLQNNEKEGKKERAVVDK. Asn-12 carries N-linked (GlcNAc...) asparagine glycosylation. Lys-61 is subject to N6-acetyllysine. Residues 84–104 traverse the membrane as a helical segment; that stretch reads GYLILIAVMLVSRTYCDVWMI. One can recognise an ABC transmembrane type-1 domain in the interval 85–372; that stretch reads YLILIAVMLV…MLLRMSQALG (288 aa). Asn-106 is a glycosylation site (N-linked (GlcNAc...) asparagine). A helical membrane pass occupies residues 126-146; sequence LFNFIAAMPLISLVNNFLKYG. The N-linked (GlcNAc...) asparagine glycan is linked to Asn-206. A helical transmembrane segment spans residues 224–244; it reads AIGAQGPASMMAYLLVSGLFL. Lys-260 bears the N6-acetyllysine mark. The chain crosses the membrane as a helical span at residues 313–333; the sequence is MGFIDSIIAKYIATVVGYLVV. Lys-399 is subject to N6-acetyllysine. Position 424 is a phosphoserine (Ser-424). In terms of domain architecture, ABC transporter spans 434 to 659; it reads INADNIIKFD…ITEDTVEFGS (226 aa). 473–480 provides a ligand contact to ATP; it reads GPNGCGKS. Lys-533 carries the N6-acetyllysine modification. Ser-659 carries the phosphoserine modification.

The protein belongs to the ABC transporter superfamily. ABCD family. Peroxisomal fatty acyl CoA transporter (TC 3.A.1.203) subfamily. Homodimers. Can form heterodimers with ABCD1 and ABCD2. Dimerization is necessary to form an active transporter. Interacts with PEX19; mediates the targeting of ABCD3 to peroxisomes. Ubiquitinated by PEX2 during pexophagy in response to starvation, leading to its degradation.

The protein localises to the peroxisome membrane. It carries out the reaction a very long-chain fatty acyl-CoA + H2O = a very long-chain fatty acid + CoA + H(+). The enzyme catalyses a very long-chain fatty acid(in) + ATP + H2O = a very long-chain fatty acid(out) + ADP + phosphate + H(+). It catalyses the reaction a long-chain fatty acyl-CoA + H2O = a long-chain fatty acid + CoA + H(+). The catalysed reaction is a long-chain fatty acid(in) + ATP + H2O = a long-chain fatty acid(out) + ADP + phosphate + H(+). It carries out the reaction pristanoyl-CoA + H2O = 2,6,10,14-tetramethylpentadecanoate + CoA + H(+). The enzyme catalyses 2,6,10,14-tetramethylpentadecanoate(in) + ATP + H2O = 2,6,10,14-tetramethylpentadecanoate(out) + ADP + phosphate + H(+). It catalyses the reaction hexadecanedioyl-CoA + H2O = hexadecanedioate + CoA + H(+). The catalysed reaction is hexadecanedioate(in) + ATP + H2O = hexadecanedioate(out) + ADP + phosphate + H(+). It carries out the reaction (5Z,8Z,11Z,14Z,17Z)-eicosapentaenoyl-CoA + H2O = (5Z,8Z,11Z,14Z,17Z)-eicosapentaenoate + CoA + H(+). The enzyme catalyses (5Z,8Z,11Z,14Z,17Z)-eicosapentaenoate(in) + ATP + H2O = (5Z,8Z,11Z,14Z,17Z)-eicosapentaenoate(out) + ADP + phosphate + H(+). It catalyses the reaction (4Z,7Z,10Z,13Z,16Z,19Z)-docosahexaenoyl-CoA + H2O = (4Z,7Z,10Z,13Z,16Z,19Z)-docosahexaenoate + CoA + H(+). The catalysed reaction is (4Z,7Z,10Z,13Z,16Z,19Z)-docosahexaenoate(in) + ATP + H2O = (4Z,7Z,10Z,13Z,16Z,19Z)-docosahexaenoate(out) + ADP + phosphate + H(+). In terms of biological role, broad substrate specificity ATP-dependent transporter of the ATP-binding cassette (ABC) family that catalyzes the transport of long-chain fatty acids (LCFA)-CoA, dicarboxylic acids-CoA, long-branched-chain fatty acids-CoA and bile acids from the cytosol to the peroxisome lumen for beta-oxydation. Has fatty acyl-CoA thioesterase and ATPase activities. Probably hydrolyzes fatty acyl-CoAs into free fatty acids prior to their ATP-dependent transport into peroxisomes. Thus, play a role in regulation of LCFAs and energy metabolism namely, in the degradation and biosynthesis of fatty acids by beta-oxidation. The protein is ATP-binding cassette sub-family D member 3 (Abcd3) of Rattus norvegicus (Rat).